The sequence spans 145 residues: D-aminoacyl-tRNA deacylase (145 aa).

The Gly-cisPro motif, important for rejection of L-amino acids motif lies at 137 to 138; sequence GP.

This sequence belongs to the DTD family. As to quaternary structure, homodimer.

It localises to the cytoplasm. It catalyses the reaction glycyl-tRNA(Ala) + H2O = tRNA(Ala) + glycine + H(+). The catalysed reaction is a D-aminoacyl-tRNA + H2O = a tRNA + a D-alpha-amino acid + H(+). In terms of biological role, an aminoacyl-tRNA editing enzyme that deacylates mischarged D-aminoacyl-tRNAs. Also deacylates mischarged glycyl-tRNA(Ala), protecting cells against glycine mischarging by AlaRS. Acts via tRNA-based rather than protein-based catalysis; rejects L-amino acids rather than detecting D-amino acids in the active site. By recycling D-aminoacyl-tRNA to D-amino acids and free tRNA molecules, this enzyme counteracts the toxicity associated with the formation of D-aminoacyl-tRNA entities in vivo and helps enforce protein L-homochirality. This chain is D-aminoacyl-tRNA deacylase, found in Pseudomonas fluorescens (strain SBW25).